The sequence spans 102 residues: Large ribosomal subunit protein bL21 (102 aa).

Belongs to the bacterial ribosomal protein bL21 family. In terms of assembly, part of the 50S ribosomal subunit. Contacts protein L20.

In terms of biological role, this protein binds to 23S rRNA in the presence of protein L20. This chain is Large ribosomal subunit protein bL21, found in Campylobacter jejuni subsp. jejuni serotype O:6 (strain 81116 / NCTC 11828).